The following is a 461-amino-acid chain: Tumor necrosis factor receptor superfamily member 1A (461 aa).

The first 29 residues, 1–29 (MGLSTVPGLLLPLVLRALLVDVYPAGVHG), serve as a signal peptide directing secretion. Topologically, residues 30–210 (LVLHPGDREK…RNDFQDTGTT (181 aa)) are extracellular. TNFR-Cys repeat units follow at residues 43–82 (LCPQ…TDCR), 83–125 (ECDN…DTVC), 126–166 (GCRK…DTIC), and 167–195 (NCHS…NLCP). Cystine bridges form between Cys44–Cys58, Cys59–Cys72, Cys62–Cys81, Cys84–Cys99, Cys102–Cys117, Cys105–Cys125, and Cys127–Cys143. Asn54 is a glycosylation site (N-linked (GlcNAc...) asparagine). The N-linked (GlcNAc...) asparagine glycan is linked to Asn86. Residues Asn145 and Asn151 are each glycosylated (N-linked (GlcNAc...) asparagine). Intrachain disulfides connect Cys146-Cys158, Cys149-Cys166, Cys168-Cys179, Cys182-Cys194, and Cys185-Cys190. Residues 211 to 233 (VLLPLVIFFGLCLAFFLFVGLAC) traverse the membrane as a helical segment. Residues 234-461 (RYQRWKPKLY…RLAPAPHLLR (228 aa)) lie on the Cytoplasmic side of the membrane. The interval 340-350 (LPKWGGSAHSA) is N-SMase activation domain (NSD). The Death domain occupies 362-447 (PATLYAVVDG…GCLEDIEEAL (86 aa)).

In terms of assembly, binding of TNF to the extracellular domain leads to homotrimerization. The aggregated death domains provide a novel molecular interface that interacts specifically with the death domain of TRADD. Various TRADD-interacting proteins such as TRAFS, RIPK1 and possibly FADD, are recruited to the complex by their association with TRADD. This complex activates at least two distinct signaling cascades, apoptosis and NF-kappa-B signaling. Interacts with BAG4, BABAM2, FEM1B, GRB2, SQSTM1 and TRPC4AP. Interacts with DAB2IP. Interacts directly with NOL3 (via CARD domain); inhibits TNF-signaling pathway. Interacts with SH3RF2, TRADD and RIPK1. SH3RF2 facilitates the recruitment of RIPK1 and TRADD to TNFRSF1A in a TNF-alpha-dependent process. Interacts with PGLYRP1; this interaction is important for cell death induction. Interacts (via death domain) with MADD (via death domain).

It localises to the cell membrane. The protein resides in the golgi apparatus membrane. Functionally, receptor for TNFSF2/TNF-alpha and homotrimeric TNFSF1/lymphotoxin-alpha. The adapter molecule FADD recruits caspase-8 to the activated receptor. The resulting death-inducing signaling complex (DISC) performs caspase-8 proteolytic activation which initiates the subsequent cascade of caspases (aspartate-specific cysteine proteases) mediating apoptosis. This chain is Tumor necrosis factor receptor superfamily member 1A (TNFRSF1A), found in Sus scrofa (Pig).